Reading from the N-terminus, the 1170-residue chain is Integrin alpha-2 (1170 aa).

A signal peptide spans 1-18 (PLQLVLVFSQGILNCCVA). Topologically, residues 19-1121 (YNVGLPKAKI…KPHEKVEVPT (1103 aa)) are extracellular. FG-GAP repeat units follow at residues 23–81 (LPKA…TTTC) and 90–150 (TSMS…LRTS). Residues cysteine 72 and cysteine 81 are joined by a disulfide bond. N-linked (GlcNAc...) asparagine glycosylation is found at asparagine 94, asparagine 101, and asparagine 332. A VWFA domain is found at 177-354 (WDAVKNFLEK…TIGEQIFSIE (178 aa)). 5 FG-GAP repeats span residues 355-409 (GTVQ…LIFS), 412-464 (AFEQ…ENGN), 466-528 (TVIQ…ILNW), 529-587 (HQFL…MIRL), and 591-653 (QKIL…FTPK). Asparagine 421, asparagine 449, and asparagine 464 each carry an N-linked (GlcNAc...) asparagine glycan. The Cell attachment site motif lies at 472-474 (RGD). Residues aspartate 488, asparagine 490, aspartate 492, aspartate 496, aspartate 552, asparagine 554, aspartate 556, aspartate 560, aspartate 616, asparagine 618, aspartate 620, and aspartate 624 each coordinate Ca(2+). Residues cysteine 669 and cysteine 726 are joined by a disulfide bond. Asparagine 688 and asparagine 748 each carry an N-linked (GlcNAc...) asparagine glycan. 2 disulfide bridges follow: cysteine 778–cysteine 784 and cysteine 854–cysteine 865. The N-linked (GlcNAc...) asparagine glycan is linked to asparagine 945. 2 disulfide bridges follow: cysteine 1008–cysteine 1039 and cysteine 1044–cysteine 1049. N-linked (GlcNAc...) asparagine glycosylation is found at asparagine 1063 and asparagine 1070. The chain crosses the membrane as a helical span at residues 1122 to 1143 (GVIVGSVIAGILLLLALVAILW). Residues 1144-1170 (KLGFFKRKYEKMAKNPDETDETTELNS) lie on the Cytoplasmic side of the membrane. The GFFKR motif signature appears at 1146-1150 (GFFKR).

It belongs to the integrin alpha chain family. As to quaternary structure, heterodimer of an alpha and a beta subunit. Alpha-2 associates with beta-1. Interacts with HPS5 and RAB21.

It localises to the membrane. Its function is as follows. Integrin alpha-2/beta-1 is a receptor for laminin, collagen, collagen C-propeptides, fibronectin and E-cadherin. It recognizes the proline-hydroxylated sequence G-F-P-G-E-R in collagen. It is responsible for adhesion of platelets and other cells to collagens, modulation of collagen and collagenase gene expression, force generation and organization of newly synthesized extracellular matrix. The polypeptide is Integrin alpha-2 (ITGA2) (Bos taurus (Bovine)).